The primary structure comprises 557 residues: MFS-type transporter clz4 (557 aa).

Transmembrane regions (helical) follow at residues 22 to 42 (LIIV…DHNG), 59 to 79 (SITW…VLYG), 89 to 109 (ALFV…GFAT), 120 to 140 (LTGA…TDVV), 150 to 170 (AVVA…AAGV), 179 to 199 (GLFW…GYIL), 217 to 237 (WLGS…VSGP), 245 to 265 (SLLV…FLFI), 269 to 289 (LATL…SALL), 319 to 339 (VISG…SMIA), 346 to 366 (SGQY…GSLL), 379 to 399 (VIIV…PMVI), 419 to 439 (FFRF…LQST), and 479 to 499 (HVYI…FVWK). A compositionally biased stretch (basic and acidic residues) spans 505-523 (SRPTENNDDIEHAPARGIE). Residues 505-557 (SRPTENNDDIEHAPARGIEREDEQSSLIYDREPSAVSYGTVEAGEPNRLRRGG) are disordered.

It belongs to the major facilitator superfamily. TCR/Tet family.

It localises to the membrane. Its function is as follows. MFS-type transporter; part of the gene cluster that mediates the biosynthesis of squalestatin S1 (SQS1, also known as zaragozic acid A), a heavily oxidized fungal polyketide that offers potent cholesterol lowering activity by targeting squalene synthase (SS). This is MFS-type transporter clz4 from Cochliobolus lunatus (Filamentous fungus).